Here is a 225-residue protein sequence, read N- to C-terminus: Cytidylate kinase (225 aa).

11-19 (GPAGVGKST) provides a ligand contact to ATP.

The protein belongs to the cytidylate kinase family. Type 1 subfamily.

It is found in the cytoplasm. It carries out the reaction CMP + ATP = CDP + ADP. The enzyme catalyses dCMP + ATP = dCDP + ADP. The sequence is that of Cytidylate kinase from Lawsonia intracellularis (strain PHE/MN1-00).